The primary structure comprises 278 residues: Ribosomal RNA small subunit methyltransferase J (278 aa).

S-adenosyl-L-methionine-binding positions include 143-144 (ER) and D197.

It belongs to the methyltransferase superfamily. RsmJ family.

The protein localises to the cytoplasm. The catalysed reaction is guanosine(1516) in 16S rRNA + S-adenosyl-L-methionine = N(2)-methylguanosine(1516) in 16S rRNA + S-adenosyl-L-homocysteine + H(+). Functionally, specifically methylates the guanosine in position 1516 of 16S rRNA. This is Ribosomal RNA small subunit methyltransferase J from Marinobacter nauticus (strain ATCC 700491 / DSM 11845 / VT8) (Marinobacter aquaeolei).